A 277-amino-acid chain; its full sequence is MASAGGGGSESAAPEADRPQPRPFLIGVSGGTASGKSTVCEKIMELLGQNEVDRRQRKLVILSQDCFYKVLTAEQKAKALKGQYNFDHPDAFDNDLMHKTLKNIVEGKTVEVPTYDFVTHSRLPETTVVYPADVVLFEGILVFYTQEIRDMFHLRLFVDTDSDVRLSRRVLRDVQRGRDLEQILTQYTAFVKPAFEEFCLPTKKYADVIIPRGVDNMVAINLIVQHIQDILNGDLCKRHRGGPNGRNHKRTFPEPGDHPGVLATGKRSHLESSSRPH.

The segment at 1–30 (MASAGGGGSESAAPEADRPQPRPFLIGVSG) is disordered. 30 to 38 (GGTASGKST) is an ATP binding site. Positions 87, 115, 120, 169, 178, and 186 each coordinate substrate. Asp215 serves as a coordination point for ATP. The span at 238-250 (RHRGGPNGRNHKR) shows a compositional bias: basic residues. Positions 238–277 (RHRGGPNGRNHKRTFPEPGDHPGVLATGKRSHLESSSRPH) are disordered. Thr251 is subject to Phosphothreonine. The span at 268-277 (SHLESSSRPH) shows a compositional bias: basic and acidic residues.

This sequence belongs to the uridine kinase family.

It catalyses the reaction uridine + ATP = UMP + ADP + H(+). The catalysed reaction is cytidine + ATP = CMP + ADP + H(+). It participates in pyrimidine metabolism; CTP biosynthesis via salvage pathway; CTP from cytidine: step 1/3. The protein operates within pyrimidine metabolism; UMP biosynthesis via salvage pathway; UMP from uridine: step 1/1. Its function is as follows. Phosphorylates uridine and cytidine to uridine monophosphate and cytidine monophosphate. Does not phosphorylate deoxyribonucleosides or purine ribonucleosides. Can use ATP or GTP as a phosphate donor. This chain is Uridine-cytidine kinase 1 (Uck1), found in Mus musculus (Mouse).